Here is a 705-residue protein sequence, read N- to C-terminus: Elongation factor G (705 aa).

Positions 8–290 (ERYRNFGIMA…GVVHLLPSPA (283 aa)) constitute a tr-type G domain. Residues 17-24 (AHIDAGKT), 88-92 (DTPGH), and 142-145 (NKMD) each bind GTP. Residues 290–309 (ADRPPVQGIDEDEKEDTRAA) are disordered.

The protein belongs to the TRAFAC class translation factor GTPase superfamily. Classic translation factor GTPase family. EF-G/EF-2 subfamily.

It localises to the cytoplasm. Its function is as follows. Catalyzes the GTP-dependent ribosomal translocation step during translation elongation. During this step, the ribosome changes from the pre-translocational (PRE) to the post-translocational (POST) state as the newly formed A-site-bound peptidyl-tRNA and P-site-bound deacylated tRNA move to the P and E sites, respectively. Catalyzes the coordinated movement of the two tRNA molecules, the mRNA and conformational changes in the ribosome. This Xanthomonas euvesicatoria pv. vesicatoria (strain 85-10) (Xanthomonas campestris pv. vesicatoria) protein is Elongation factor G.